A 153-amino-acid polypeptide reads, in one-letter code: Superoxide dismutase [Cu-Zn] (153 aa).

Residues H45, H47, and H62 each contribute to the Cu cation site. Cysteines 56 and 145 form a disulfide. Residues H62, H70, H79, and D82 each contribute to the Zn(2+) site. Residue H119 participates in Cu cation binding.

This sequence belongs to the Cu-Zn superoxide dismutase family. In terms of assembly, homodimer. It depends on Cu cation as a cofactor. Zn(2+) serves as cofactor.

It is found in the cytoplasm. The enzyme catalyses 2 superoxide + 2 H(+) = H2O2 + O2. Destroys radicals which are normally produced within the cells and which are toxic to biological systems. This chain is Superoxide dismutase [Cu-Zn], found in Drosophila willistoni (Fruit fly).